The chain runs to 1020 residues: UPF0182 protein jk1603 (1020 aa).

Over residues 1 to 18 the composition is skewed to pro residues; the sequence is MSTPTPPSSGRPKQPFPS. Positions 1-23 are disordered; sequence MSTPTPPSSGRPKQPFPSSPGSS. 7 helical membrane passes run 28 to 48, 73 to 93, 125 to 145, 175 to 195, 227 to 247, 272 to 292, and 300 to 320; these read ILGI…VVVS, LVLF…AAFL, FLVG…QSNW, LPFL…AFVI, LAVI…FDRY, QIVL…TIVL, and LAVA…PAML. Positions 924–998 are disordered; sequence QEIDGSVVDP…KVNKTRESGT (75 aa). 2 stretches are compositionally biased toward basic and acidic residues: residues 942-961 and 969-998; these read KGDK…EQSS and KSDD…ESGT.

It belongs to the UPF0182 family.

The protein resides in the cell membrane. In Corynebacterium jeikeium (strain K411), this protein is UPF0182 protein jk1603.